Here is an 834-residue protein sequence, read N- to C-terminus: Taste receptor type 1 member 2 (834 aa).

Residues M1–A19 form the signal peptide. Over E20–T561 the chain is Extracellular. N84, N292, N312, N363, N423, N482, and N522 each carry an N-linked (GlcNAc...) asparagine glycan. Residues I562 to F582 traverse the membrane as a helical segment. At W583 to P597 the chain is on the cytoplasmic side. The chain crosses the membrane as a helical span at residues M598–G618. Topologically, residues L619–A630 are extracellular. A helical transmembrane segment spans residues L631–V651. Over C652 to S676 the chain is Cytoplasmic. A helical transmembrane segment spans residues V677–L697. At N698–S722 the chain is on the extracellular side. Residues L723–M743 traverse the membrane as a helical segment. The Cytoplasmic portion of the chain corresponds to G744–K755. Residues F756–S776 traverse the membrane as a helical segment. Topologically, residues V777–D779 are extracellular. The helical transmembrane segment at G780–L800 threads the bilayer. Topologically, residues G801–D834 are cytoplasmic.

This sequence belongs to the G-protein coupled receptor 3 family. TAS1R subfamily. In terms of assembly, forms heterodimers with TAS1R3.

The protein localises to the cell membrane. In terms of biological role, putative taste receptor. TAS1R2/TAS1R3 recognizes diverse natural and synthetic sweeteners. The sequence is that of Taste receptor type 1 member 2 (TAS1R2) from Saimiri sciureus (Common squirrel monkey).